We begin with the raw amino-acid sequence, 475 residues long: Transmembrane protein 181 (475 aa).

Helical transmembrane passes span 16 to 36 (HFVLVFVVFFICFGLTIFVGI), 131 to 151 (EIIVAHLGYLNYTQYTVIVGF), 175 to 195 (LEIWFRFFFVVLTFIVTCLFA), 214 to 234 (SVLLPLLLLYNDPFFPLSFLV), 245 to 265 (LFQSMFLCALLLFWLCVYHGI), 276 to 296 (FYLPKFFIVGLLWLASVTLGI), 320 to 340 (MKVFFMVVAAVYILYLLFLIV), 356 to 376 (LKFLTALTFVVLVISIAILYL), and 401 to 421 (FLSFYGLLNFYLYTLAFVYSP). Position 443 is a phosphoserine (S443).

The protein belongs to the TMEM181 family. In terms of assembly, interacts with cytolethal distending toxin.

The protein localises to the membrane. Its function is as follows. Mediates action of cytolethal distending toxins (CDT), which are secreted by many pathogenic bacteria. Expression level of TMEM181 is rate-limiting for intoxication. This Homo sapiens (Human) protein is Transmembrane protein 181 (TMEM181).